Reading from the N-terminus, the 194-residue chain is Pyridoxal 5'-phosphate synthase subunit PdxT (194 aa).

Position 54–56 (54–56 (GES)) interacts with L-glutamine. C83 functions as the Nucleophile in the catalytic mechanism. L-glutamine-binding positions include R110 and 139 to 140 (IR). Active-site charge relay system residues include H175 and E177.

It belongs to the glutaminase PdxT/SNO family. As to quaternary structure, in the presence of PdxS, forms a dodecamer of heterodimers. Only shows activity in the heterodimer.

The catalysed reaction is aldehydo-D-ribose 5-phosphate + D-glyceraldehyde 3-phosphate + L-glutamine = pyridoxal 5'-phosphate + L-glutamate + phosphate + 3 H2O + H(+). The enzyme catalyses L-glutamine + H2O = L-glutamate + NH4(+). It participates in cofactor biosynthesis; pyridoxal 5'-phosphate biosynthesis. Functionally, catalyzes the hydrolysis of glutamine to glutamate and ammonia as part of the biosynthesis of pyridoxal 5'-phosphate. The resulting ammonia molecule is channeled to the active site of PdxS. The polypeptide is Pyridoxal 5'-phosphate synthase subunit PdxT (Methanoregula boonei (strain DSM 21154 / JCM 14090 / 6A8)).